The primary structure comprises 595 residues: NADH-quinone oxidoreductase subunit C/D (595 aa).

The tract at residues 1–186 (MAETDIAMPE…TPYMQDKAKQ (186 aa)) is NADH dehydrogenase I subunit C. Positions 210–595 (DFMFLNLGPN…IDVVMADVDR (386 aa)) are NADH dehydrogenase I subunit D.

In the N-terminal section; belongs to the complex I 30 kDa subunit family. The protein in the C-terminal section; belongs to the complex I 49 kDa subunit family. In terms of assembly, NDH-1 is composed of 13 different subunits. Subunits NuoB, CD, E, F, and G constitute the peripheral sector of the complex.

Its subcellular location is the cell inner membrane. It carries out the reaction a quinone + NADH + 5 H(+)(in) = a quinol + NAD(+) + 4 H(+)(out). NDH-1 shuttles electrons from NADH, via FMN and iron-sulfur (Fe-S) centers, to quinones in the respiratory chain. The immediate electron acceptor for the enzyme in this species is believed to be ubiquinone. Couples the redox reaction to proton translocation (for every two electrons transferred, four hydrogen ions are translocated across the cytoplasmic membrane), and thus conserves the redox energy in a proton gradient. The sequence is that of NADH-quinone oxidoreductase subunit C/D from Acinetobacter baumannii (strain AYE).